The following is an 828-amino-acid chain: Isethionate sulfite-lyase (828 aa).

The PFL domain occupies 30–698 (ERVFTILESF…VVSATPNGRK (669 aa)). Residues Arg187, Gln191, 466–468 (CTE), and Arg676 each bind 2-hydroxyethane-1-sulfonate. The Cysteine radical intermediate role is filled by Cys466. The active-site Proton acceptor is the Glu468. Residues 705 to 828 (DGSSASHGAD…LIARTGHDVM (124 aa)) form the Glycine radical domain. Gly803 carries the glycine radical modification.

Belongs to the glycyl radical enzyme (GRE) family. In terms of assembly, homodimer. In terms of processing, requires the activating protein IseH to generate the key active site glycyl radical on Gly-803 that is involved in catalysis.

It carries out the reaction 2-hydroxyethane-1-sulfonate = acetaldehyde + sulfite + H(+). Its pathway is organosulfur degradation; alkanesulfonate degradation. Functionally, involved in an anaerobic respiration pathway that converts the sulfonate isethionate (2-hydroxyethanesulfonate) to ammonia, acetate and sulfide. Catalyzes the radical-mediated C-S bond cleavage of isethionate (2-hydroxyethanesulfonate) to form sulfite and acetaldehyde. Shows no activity with taurine or ethanolamine as substrates. The polypeptide is Isethionate sulfite-lyase (Nitratidesulfovibrio vulgaris (strain ATCC 29579 / DSM 644 / CCUG 34227 / NCIMB 8303 / VKM B-1760 / Hildenborough) (Desulfovibrio vulgaris)).